The primary structure comprises 912 residues: Probable dipeptidyl-aminopeptidase B (912 aa).

Positions 1–25 (MAAEKGESSDEERKPLTRDSMEYRD) are enriched in basic and acidic residues. Disordered stretches follow at residues 1–31 (MAAE…NSLH) and 49–70 (GSTH…SDDG). Over 1–92 (MAAEKGESSD…GGKPVQKKVK (92 aa)) the chain is Cytoplasmic. A helical; Signal-anchor for type II membrane protein membrane pass occupies residues 93–113 (IVLGFLLFLCLSGWSLSFVLF). Residues 114–912 (LFGGHESSKT…RAAIWVGLSI (799 aa)) lie on the Vacuolar side of the membrane. Residues Asn130, Asn210, Asn346, Asn569, and Asn656 are each glycosylated (N-linked (GlcNAc...) asparagine). Ser751 serves as the catalytic Charge relay system. N-linked (GlcNAc...) asparagine glycosylation is present at Asn810. Catalysis depends on charge relay system residues Asp828 and His861. Asn897 carries N-linked (GlcNAc...) asparagine glycosylation.

The protein belongs to the peptidase S9B family.

Its subcellular location is the vacuole membrane. The catalysed reaction is Release of an N-terminal dipeptide, Xaa-Yaa-|-Zaa-, from a polypeptide, preferentially when Yaa is Pro, provided Zaa is neither Pro nor hydroxyproline.. Type IV dipeptidyl-peptidase which removes N-terminal dipeptides sequentially from polypeptides having unsubstituted N-termini provided that the penultimate residue is proline. The sequence is that of Probable dipeptidyl-aminopeptidase B (DAPB) from Paracoccidioides lutzii (strain ATCC MYA-826 / Pb01) (Paracoccidioides brasiliensis).